The sequence spans 274 residues: 4-diphosphocytidyl-2-C-methyl-D-erythritol kinase (274 aa).

The active site involves Lys-8. Residue Pro-94–Ala-104 coordinates ATP. Asp-136 is an active-site residue.

It belongs to the GHMP kinase family. IspE subfamily.

The catalysed reaction is 4-CDP-2-C-methyl-D-erythritol + ATP = 4-CDP-2-C-methyl-D-erythritol 2-phosphate + ADP + H(+). The protein operates within isoprenoid biosynthesis; isopentenyl diphosphate biosynthesis via DXP pathway; isopentenyl diphosphate from 1-deoxy-D-xylulose 5-phosphate: step 3/6. Functionally, catalyzes the phosphorylation of the position 2 hydroxy group of 4-diphosphocytidyl-2C-methyl-D-erythritol. This chain is 4-diphosphocytidyl-2-C-methyl-D-erythritol kinase, found in Bacteroides fragilis (strain ATCC 25285 / DSM 2151 / CCUG 4856 / JCM 11019 / LMG 10263 / NCTC 9343 / Onslow / VPI 2553 / EN-2).